Here is a 77-residue protein sequence, read N- to C-terminus: Translation initiation factor IF-1, chloroplastic (77 aa).

An S1-like domain is found at 1 to 71 (MKEQKLIHEG…TRGRIIYRLR (71 aa)).

Belongs to the IF-1 family. Component of the 30S ribosomal translation pre-initiation complex which assembles on the 30S ribosome in the order IF-2 and IF-3, IF-1 and N-formylmethionyl-tRNA(fMet); mRNA recruitment can occur at any time during PIC assembly.

It localises to the plastid. It is found in the chloroplast. Functionally, one of the essential components for the initiation of protein synthesis. Stabilizes the binding of IF-2 and IF-3 on the 30S subunit to which N-formylmethionyl-tRNA(fMet) subsequently binds. Helps modulate mRNA selection, yielding the 30S pre-initiation complex (PIC). Upon addition of the 50S ribosomal subunit IF-1, IF-2 and IF-3 are released leaving the mature 70S translation initiation complex. In Liriodendron tulipifera (Tuliptree), this protein is Translation initiation factor IF-1, chloroplastic.